Reading from the N-terminus, the 291-residue chain is MMKVYFIGTGGGAPSRRGLPAYLVRREGLSILMDCGEGTQITMIRNSLNIMNVNVIAITHLHADHVLGLPSLIQTMGMYDRKERLYILGPEGLKDLLTETFERTYFSPNFPIEFVSSYESQGIRVRPFRTCHVVPSQGYLVEEKDTANLDAERLRREGVTDWRVMRMLKEGKEVPWGDRVLKPEDYLIVKRGIRIAYTGDTRPCETVINSVKGVDLLLHDSTFEQGIDASEYGHSTSTEAATVAREAEVKRLALIHISARYRDTSEMLKQARRIFPMSFVPEDLSFLNLRA.

Zn(2+)-binding residues include histidine 60, histidine 62, aspartate 64, histidine 65, histidine 132, aspartate 200, and histidine 256. The active-site Proton acceptor is aspartate 64.

It belongs to the RNase Z family. As to quaternary structure, homodimer. The cofactor is Zn(2+).

The enzyme catalyses Endonucleolytic cleavage of RNA, removing extra 3' nucleotides from tRNA precursor, generating 3' termini of tRNAs. A 3'-hydroxy group is left at the tRNA terminus and a 5'-phosphoryl group is left at the trailer molecule.. Its function is as follows. Zinc phosphodiesterase, which displays some tRNA 3'-processing endonuclease activity. Probably involved in tRNA maturation, by removing a 3'-trailer from precursor tRNA. This Metallosphaera sedula (strain ATCC 51363 / DSM 5348 / JCM 9185 / NBRC 15509 / TH2) protein is Ribonuclease Z.